The chain runs to 190 residues: Somatotropin (190 aa).

Residue histidine 19 coordinates Zn(2+). Cysteine 52 and cysteine 163 form a disulfide bridge. Residue glutamate 172 participates in Zn(2+) binding. Cysteine 180 and cysteine 188 are disulfide-bonded.

Belongs to the somatotropin/prolactin family.

Its subcellular location is the secreted. Functionally, growth hormone plays an important role in growth control and involved in the regulation of several anabolic processes. The chain is Somatotropin (GH) from Crocodylus novaeguineae (Crocodile).